A 462-amino-acid chain; its full sequence is Elongation factor 1-alpha (462 aa).

G2 bears the Blocked amino end (Gly) mark. One can recognise a tr-type G domain in the interval 5 to 242; sequence KIHINIVVIG…DAILPPSRPT (238 aa). The segment at 14 to 21 is G1; it reads GHVDSGKS. 14–21 serves as a coordination point for GTP; that stretch reads GHVDSGKS. K36 bears the N6,N6,N6-trimethyllysine mark. K55 carries the N6-methyllysine modification. The segment at 70–74 is G2; that stretch reads GITID. K79 is modified (N6,N6,N6-trimethyllysine). Residues 91–94 are G3; the sequence is DAPG. Residues 91 to 95 and 153 to 156 each bind GTP; these read DAPGH and NKMD. The tract at residues 153-156 is G4; it reads NKMD. Residues 194–196 form a G5 region; that stretch reads SGW. Residues K219 and K318 each carry the N6,N6,N6-trimethyllysine modification. A 5-glutamyl glycerylphosphorylethanolamine modification is found at E374.

It belongs to the TRAFAC class translation factor GTPase superfamily. Classic translation factor GTPase family. EF-Tu/EF-1A subfamily. Post-translationally, the N-terminus is blocked.

Its subcellular location is the cytoplasm. Its function is as follows. This protein promotes the GTP-dependent binding of aminoacyl-tRNA to the A-site of ribosomes during protein biosynthesis. In Artemia salina (Brine shrimp), this protein is Elongation factor 1-alpha.